Consider the following 429-residue polypeptide: Phosphoribosylamine--glycine ligase (429 aa).

Residues 109–316 (KDFLARHQIP…LVDLCLAAID (208 aa)) form the ATP-grasp domain. ATP is bound at residue 135-196 (VREQGAPIVV…EEFLDGEEAS (62 aa)). The segment at 212-235 (SQDHKRVGDKDTGPNTGGMGAYSP) is disordered. Residues 213-223 (QDHKRVGDKDT) show a composition bias toward basic and acidic residues. Mg(2+) is bound by residues E286 and N288.

The protein belongs to the GARS family. Requires Mg(2+) as cofactor. The cofactor is Mn(2+).

The catalysed reaction is 5-phospho-beta-D-ribosylamine + glycine + ATP = N(1)-(5-phospho-beta-D-ribosyl)glycinamide + ADP + phosphate + H(+). Its pathway is purine metabolism; IMP biosynthesis via de novo pathway; N(1)-(5-phospho-D-ribosyl)glycinamide from 5-phospho-alpha-D-ribose 1-diphosphate: step 2/2. This is Phosphoribosylamine--glycine ligase from Vibrio parahaemolyticus serotype O3:K6 (strain RIMD 2210633).